We begin with the raw amino-acid sequence, 213 residues long: Reticulon-3 (213 aa).

Residues 1-16 (MADTSGPQSSHISSSA) show a composition bias toward polar residues. The interval 1 to 20 (MADTSGPQSSHISSSAGEKG) is disordered. In terms of domain architecture, Reticulon spans 25–213 (VQDLLYWRDV…LPGALKKKSE (189 aa)). The next 2 helical transmembrane spans lie at 45 to 65 (MVLL…YLVL) and 154 to 174 (VFNG…APIV).

Homodimer.

It localises to the endoplasmic reticulum membrane. The protein resides in the golgi apparatus membrane. May be involved in membrane trafficking in the early secretory pathway. The protein is Reticulon-3 (rtn3) of Xenopus tropicalis (Western clawed frog).